The primary structure comprises 487 residues: GTPase Der (487 aa).

EngA-type G domains follow at residues 2-164 and 203-374; these read KTIA…SLAK and IAVG…QRFA. GTP contacts are provided by residues 8-15, 55-59, 116-119, 209-216, 256-260, and 320-323; these read GKPNVGKS, DTGGI, NKVD, GRVNVGKS, DTAGI, and NKWD. The KH-like domain occupies 375-459; it reads YRIPTSALND…PILLSVKGKN (85 aa). Over residues 459 to 480 the composition is skewed to basic and acidic residues; that stretch reads NAKDEENTSAKKESPSKVSHRE. The interval 459 to 487 is disordered; sequence NAKDEENTSAKKESPSKVSHRESKNRRFV.

It belongs to the TRAFAC class TrmE-Era-EngA-EngB-Septin-like GTPase superfamily. EngA (Der) GTPase family. Associates with the 50S ribosomal subunit.

Functionally, GTPase that plays an essential role in the late steps of ribosome biogenesis. The sequence is that of GTPase Der from Helicobacter hepaticus (strain ATCC 51449 / 3B1).